The sequence spans 199 residues: uncharacterized protein (199 aa).

This is an uncharacterized protein from Treponema pallidum (strain Nichols).